The primary structure comprises 95 residues: Glutamyl-tRNA(Gln) amidotransferase subunit C (95 aa).

This sequence belongs to the GatC family. In terms of assembly, heterotrimer of A, B and C subunits.

It catalyses the reaction L-glutamyl-tRNA(Gln) + L-glutamine + ATP + H2O = L-glutaminyl-tRNA(Gln) + L-glutamate + ADP + phosphate + H(+). The enzyme catalyses L-aspartyl-tRNA(Asn) + L-glutamine + ATP + H2O = L-asparaginyl-tRNA(Asn) + L-glutamate + ADP + phosphate + 2 H(+). Functionally, allows the formation of correctly charged Asn-tRNA(Asn) or Gln-tRNA(Gln) through the transamidation of misacylated Asp-tRNA(Asn) or Glu-tRNA(Gln) in organisms which lack either or both of asparaginyl-tRNA or glutaminyl-tRNA synthetases. The reaction takes place in the presence of glutamine and ATP through an activated phospho-Asp-tRNA(Asn) or phospho-Glu-tRNA(Gln). The chain is Glutamyl-tRNA(Gln) amidotransferase subunit C from Caulobacter vibrioides (strain ATCC 19089 / CIP 103742 / CB 15) (Caulobacter crescentus).